We begin with the raw amino-acid sequence, 223 residues long: MQKQRFCLDTTAITDSDVRKSLGVSNISESAEKIMDIIAQARVQLDISCHIPYDTVYKELVGFLTREGCAPETLIKVDTWLVKKTPNRYEIKIPAEIFYEYIKDLRERINKGMRISENAMYETALEAYILSKPDEKDREDVLNEVLSKTVNSFRVKYRNALRGGTLDSAPDLDVLLLAKELDAAVVANDEGIEKWAQRLGLRFVNARDFPFILQEYLDLWDKK.

Belongs to the HARP family.

It carries out the reaction Endonucleolytic cleavage of RNA, removing 5'-extranucleotides from tRNA precursor.. In terms of biological role, RNA-free RNase P that catalyzes the removal of the 5'-leader sequence from pre-tRNA to produce the mature 5'-terminus. This chain is RNA-free ribonuclease P, found in Methanococcus maripaludis (strain DSM 14266 / JCM 13030 / NBRC 101832 / S2 / LL).